A 444-amino-acid polypeptide reads, in one-letter code: MKSLEEAQKFLEDHHVKYVLAQFVDIHGVAKVKSVPASHLNDILTTGAGFAGGAIWGTGIAPNGPDYMAIGELSTLSLIPWQPGYARLVCDGHVNGKPYEFDTRVVLKQQIARLAEKGWTLYTGLEPEFSLLKKDEHGAVHPFDDSDTLQKPCYDYKGITRHSPFLEKLTESLVEVGLDIYQIDHEDANGQFEINYTYADCLKSADDYIMFKMAASEIANELGIICSFMPKPFSNRPGNGMHMHMSIGDGKKSLFQDDSDPSGLGLSKLAYHFLGGILAHAPALAAVCAPTVNSYKRLVVGRSLSGATWAPAYIAYGNNNRSTLVRIPYGRLELRLPDGSCNPYLATAAVIAAGLDGVARELDPGTGRDDNLYDYSLEQLAEFGIGILPQNLGEALDALEADQVIMDAMGPGLSKEFVELKRMEWVDYMRHVSDWEINRYVQFY.

The region spanning 14-97 is the GS beta-grasp domain; that stretch reads HHVKYVLAQF…LVCDGHVNGK (84 aa). Residues 103–444 enclose the GS catalytic domain; it reads TRVVLKQQIA…WEINRYVQFY (342 aa).

It belongs to the glutamine synthetase family. Type 3 subfamily. Mg(2+) is required as a cofactor.

The enzyme catalyses methylamine + L-glutamate + ATP = N(5)-methyl-L-glutamine + ADP + phosphate + H(+). It catalyses the reaction ethylamine + L-glutamate + ATP = N(5)-ethyl-L-glutamine + ADP + phosphate + H(+). Formation of theanine is repressed by a high concentration of glutamic acid. Functionally, catalyzes the formation of N(5)-methyl-L-glutamine from glutamate and methylamine. In vitro, can also use ethylamine, hydroxylamine and ammonia, with 75%, 40% and 1% activity compared to methylamine, respectively. This is Glutamate--methylamine ligase from Methylovorus mays.